Consider the following 211-residue polypeptide: tRNA (guanine-N(7)-)-methyltransferase (211 aa).

Aspartate 40, glutamate 65, asparagine 92, and aspartate 117 together coordinate S-adenosyl-L-methionine. Aspartate 117 is an active-site residue. Lysine 121 is a binding site for substrate. The interaction with RNA stretch occupies residues 123-128; sequence RHNKRR. Aspartate 153 is a binding site for substrate.

The protein belongs to the class I-like SAM-binding methyltransferase superfamily. TrmB family.

It catalyses the reaction guanosine(46) in tRNA + S-adenosyl-L-methionine = N(7)-methylguanosine(46) in tRNA + S-adenosyl-L-homocysteine. It functions in the pathway tRNA modification; N(7)-methylguanine-tRNA biosynthesis. In terms of biological role, catalyzes the formation of N(7)-methylguanine at position 46 (m7G46) in tRNA. The sequence is that of tRNA (guanine-N(7)-)-methyltransferase from Synechocystis sp. (strain ATCC 27184 / PCC 6803 / Kazusa).